The following is a 508-amino-acid chain: WD repeat-containing protein DDB_G0290555 (508 aa).

WD repeat units lie at residues 32–74 (TSEL…LIGE), 159–198 (NVATNLSGFAMNPSNDKFAFGGKDVNLTIWDLEKQVKTYS), 252–292 (FSKH…QVGS), and 295–334 (DSAGSVKDIAIHPTLPLLATVGLDRHLRVYNLDNRKMLHK). The disordered stretch occupies residues 368–508 (ENKNRINNDD…KKFAGLKKRK (141 aa)). Residues 399–435 (MDSDDDIEDGDDNDVEFPMEADSDDSDFDLGNSDDDN) show a composition bias toward acidic residues. Residues 436 to 446 (ISVKKENKGDS) show a composition bias toward basic and acidic residues. Residues 447–456 (DDSDDDSDED) are compositionally biased toward acidic residues. Over residues 471 to 493 (NNNNNNNKGKNNKGKNNSSTKKT) the composition is skewed to low complexity. Over residues 497–508 (LKKKFAGLKKRK) the composition is skewed to basic residues.

The sequence is that of WD repeat-containing protein DDB_G0290555 from Dictyostelium discoideum (Social amoeba).